Reading from the N-terminus, the 214-residue chain is MAALSFQCLCVASAVRAWERIESMVDVSFDVIIAASAQTIQLSQQSQQCQLHSQSSAAEAYNTFIRIYGRLVPLLERAITTYATNLQPPLSTSPTFQRTDPRNLTYPLDNQVLGSVLRDFSTHRSLQEQRNPATMVCRPSKMTLGQYEMDEQQSQYLALDVICRTLRNLVIVLQEMGGGENAEIRQVDARLLTILVQVRRLLENTSATLSILES.

Residues 1–17 (MAALSFQCLCVASAVRA) form the signal peptide. N-linked (GlcNAc...) asparagine glycosylation is found at Asn-103 and Asn-204.

It participates in secondary metabolite biosynthesis. Its function is as follows. Part of the cla gene cluster that produces clavatol and ortho-quinone methide. The clavatol biosynthesis cluster cla and the terrestric acid cluster tra are both involved in the production of peniphenones and penilactones. The non-reducing PKS claF is responsible for the formation of clavatol from successive condensations of 3 malonyl-CoA units, presumably with a simple acetyl-CoA starter unit, and 2 methylation steps. The esterase claE probably collaborates with claF by catalyzing the hydrolysis of ACP-bound acyl intermediates to free the ACP from stalled intermediates. The clavatol oxidase claD then converts clavatol to hydroxyclavatol. Spontaneous dehydration of hydroxyclavatol leads to the accumulation of the highly active ortho-quinone methide. On the other hand, the PKS-NRPS hybrid traA is involved in the formation of crustosic acid, with the help of traB and traD. The polyketide synthase module (PKS) of traA is responsible for the synthesis of the polyketide backbone via the condensation of an acetyl-CoA starter unit with 3 malonyl-CoA units. The downstream nonribosomal peptide synthetase (NRPS) module then amidates the carboxyl end of the polyketide with L-malic acid. Because traA lacks a designated enoylreductase (ER) domain, the required activity is provided the enoyl reductase traG. Crustosic acid undergoes decarboxylation and isomerization to the terrestric acid, catalyzed by the 2-oxoglutarate-dependent dioxygenase traH. Both acids are further converted to the 2 gamma-butyrolactones (R)-5-methyltetronic acid and (S)-5-carboxylmethyltetronic acid, with involvement of the cytochrome P450 monooxygenase claJ. Spontaneous addition of the methide to these gamma-butyrolactones leads to peniphenone D and penilactone D, which undergo again stereospecific attacking by methide to give penilactones A and B. The function of claB has not been investigated yet. The chain is Clavatol biosynthesis cluster protein B from Penicillium crustosum (Blue mold fungus).